The following is a 224-amino-acid chain: Synaptogyrin-2 (224 aa).

Residue Met-1 is modified to N-acetylmethionine. Ser-3 bears the Phosphoserine mark. The MARVEL domain occupies 20-171 (FLSQPQVVTR…LASLAYQRYK (152 aa)). 4 helical membrane passes run 31-51 (VSMV…YTNI), 72-92 (SAIG…DAFF), 105-125 (VIGD…GFCF), and 147-167 (AAIT…SLAY).

Belongs to the synaptogyrin family. Post-translationally, may be tyrosine phosphorylated by Src.

Its subcellular location is the cytoplasmic vesicle membrane. It is found in the cytoplasmic vesicle. It localises to the secretory vesicle. The protein resides in the synaptic vesicle membrane. May play a role in regulated exocytosis. In neuronal cells, modulates the localization of synaptophysin/SYP into synaptic-like microvesicles and may therefore play a role in the formation and/or the maturation of this vesicles. May also play a role in GLUT4 storage and transport to the plasma membrane. The polypeptide is Synaptogyrin-2 (Mus musculus (Mouse)).